The sequence spans 828 residues: Protein ELFN1 (828 aa).

The signal sequence occupies residues 1–27 (MAGRGWGALWVCVAAATLLHAGGLARA). The Extracellular segment spans residues 28–418 (DCWLIEGDKG…VPSPSTATHY (391 aa)). A glycan (N-linked (GlcNAc...) asparagine) is linked at N59. 5 LRR repeats span residues 61 to 82 (TIVD…SLSR), 85 to 106 (NLTY…AFSG), 109 to 130 (NLQV…MLRG), 133 to 154 (KLEY…SFWE), and 157 to 178 (NIVN…TFAG). N-linked (GlcNAc...) asparagine glycans are attached at residues N85, N90, and N122. The LRRCT domain maps to 190–252 (NPFYCSCELL…LSKLQSVCTE (63 aa)). Residue N210 is glycosylated (N-linked (GlcNAc...) asparagine). A disordered region spans residues 259 to 291 (VVGPPRPASGRSQPGRSPPPPPPPEPSDMPCAD). Residues 274–285 (RSPPPPPPPEPS) are compositionally biased toward pro residues. Positions 312–399 (QAEARPLIKV…HNHTCLTICL (88 aa)) constitute a Fibronectin type-III domain. The stretch at 318-342 (LIKVKQLTQNSATITVQLPSPFHRM) is one LRR 6 repeat. N376 is a glycosylation site (N-linked (GlcNAc...) asparagine). A helical membrane pass occupies residues 419 to 439 (IMTILGCLFGMVLVLGAVYYC). Topologically, residues 440 to 828 (LRRRRRQEEK…WKGVSAQHKS (389 aa)) are cytoplasmic. Phosphoserine is present on S461. 3 disordered regions span residues 517-552 (TPKA…QSSV), 624-649 (LQRH…VRSP), and 696-732 (KGRQ…GLGR). The segment covering 529–541 (RTGDPPERRDCEL) has biased composition (basic and acidic residues). Low complexity predominate over residues 632–649 (AAGPPRASTSSSGSVRSP). At S645 the chain carries Phosphoserine. The span at 696–705 (KGRQYGEHRH) shows a compositional bias: basic and acidic residues. The segment covering 713 to 727 (AEPPAPPGPPPPPPH) has biased composition (pro residues).

In terms of assembly, interacts with PPP1CA.

It localises to the membrane. The protein resides in the cell projection. Its subcellular location is the dendrite. In terms of biological role, postsynaptic protein that regulates circuit dynamics in the central nervous system by modulating the temporal dynamics of interneuron recruitment. Specifically present in excitatory synapses onto oriens-lacunosum molecular (OLM) interneurons and acts as a regulator of presynaptic release probability to direct the formation of highly facilitating pyramidal-OLM synapses. Inhibits phosphatase activity of protein phosphatase 1 (PP1) complexes. The polypeptide is Protein ELFN1 (ELFN1) (Homo sapiens (Human)).